The primary structure comprises 185 residues: MINEIRKDAEIRMEKCVDAFKSHISKVRTGRASPSLLDGIQIDYYGLLTPLRQLANIIAEDSRTLAITVFDRTLAPAVEKAIMASDLGLNPSSAGTVIRVPLPPLTEERRRDLIKVVRAEAEQGRVSVRNVRRDANDKVKALLKDKTIGEDEDRRSQDEIQKLTDAWIKKLDSALAEKEAELMEI.

This sequence belongs to the RRF family.

Its subcellular location is the cytoplasm. Functionally, responsible for the release of ribosomes from messenger RNA at the termination of protein biosynthesis. May increase the efficiency of translation by recycling ribosomes from one round of translation to another. This chain is Ribosome-recycling factor, found in Sodalis glossinidius (strain morsitans).